A 336-amino-acid polypeptide reads, in one-letter code: Dihydroorotate dehydrogenase (quinone) (336 aa).

Residues 62-66 and threonine 86 each bind FMN; that span reads AGLDK. Lysine 66 contributes to the substrate binding site. 111 to 115 serves as a coordination point for substrate; it reads NRMGF. 2 residues coordinate FMN: asparagine 139 and asparagine 172. Asparagine 172 is a substrate binding site. Serine 175 functions as the Nucleophile in the catalytic mechanism. Asparagine 177 contacts substrate. 2 residues coordinate FMN: lysine 217 and threonine 245. Residue 246 to 247 participates in substrate binding; that stretch reads NT. Residues glycine 268, glycine 297, and 318–319 each bind FMN; that span reads YS.

It belongs to the dihydroorotate dehydrogenase family. Type 2 subfamily. As to quaternary structure, monomer. FMN serves as cofactor.

It is found in the cell membrane. The catalysed reaction is (S)-dihydroorotate + a quinone = orotate + a quinol. It functions in the pathway pyrimidine metabolism; UMP biosynthesis via de novo pathway; orotate from (S)-dihydroorotate (quinone route): step 1/1. Its function is as follows. Catalyzes the conversion of dihydroorotate to orotate with quinone as electron acceptor. In Shigella flexneri serotype 5b (strain 8401), this protein is Dihydroorotate dehydrogenase (quinone).